The sequence spans 166 residues: Peptide methionine sulfoxide reductase MsrA (166 aa).

Cysteine 11 is a catalytic residue.

Belongs to the MsrA Met sulfoxide reductase family.

The enzyme catalyses L-methionyl-[protein] + [thioredoxin]-disulfide + H2O = L-methionyl-(S)-S-oxide-[protein] + [thioredoxin]-dithiol. It catalyses the reaction [thioredoxin]-disulfide + L-methionine + H2O = L-methionine (S)-S-oxide + [thioredoxin]-dithiol. Its function is as follows. Has an important function as a repair enzyme for proteins that have been inactivated by oxidation. Catalyzes the reversible oxidation-reduction of methionine sulfoxide in proteins to methionine. This is Peptide methionine sulfoxide reductase MsrA from Lachnoclostridium phytofermentans (strain ATCC 700394 / DSM 18823 / ISDg) (Clostridium phytofermentans).